A 322-amino-acid polypeptide reads, in one-letter code: Protein-L-isoaspartate O-methyltransferase (322 aa).

Residues 1–101 (MSGERAKRFP…AKQGDRSAAP (101 aa)) are disordered. Residues 14–29 (EDLKREPRKPEGRVAE) are compositionally biased toward basic and acidic residues. Composition is skewed to low complexity over residues 33-51 (AGDA…PAAA) and 76-91 (HAPA…PQGG). S170 is a catalytic residue.

The protein belongs to the methyltransferase superfamily. L-isoaspartyl/D-aspartyl protein methyltransferase family.

It localises to the cytoplasm. It catalyses the reaction [protein]-L-isoaspartate + S-adenosyl-L-methionine = [protein]-L-isoaspartate alpha-methyl ester + S-adenosyl-L-homocysteine. In terms of biological role, catalyzes the methyl esterification of L-isoaspartyl residues in peptides and proteins that result from spontaneous decomposition of normal L-aspartyl and L-asparaginyl residues. It plays a role in the repair and/or degradation of damaged proteins. In Burkholderia mallei (strain NCTC 10247), this protein is Protein-L-isoaspartate O-methyltransferase.